The sequence spans 442 residues: 3-isopropylmalate dehydratase large subunit (442 aa).

[4Fe-4S] cluster is bound by residues Cys347, Cys407, and Cys410.

It belongs to the aconitase/IPM isomerase family. LeuC type 1 subfamily. Heterodimer of LeuC and LeuD. It depends on [4Fe-4S] cluster as a cofactor.

It carries out the reaction (2R,3S)-3-isopropylmalate = (2S)-2-isopropylmalate. It participates in amino-acid biosynthesis; L-leucine biosynthesis; L-leucine from 3-methyl-2-oxobutanoate: step 2/4. In terms of biological role, catalyzes the isomerization between 2-isopropylmalate and 3-isopropylmalate, via the formation of 2-isopropylmaleate. This chain is 3-isopropylmalate dehydratase large subunit, found in Buchnera aphidicola subsp. Uroleucon helianthicola.